An 83-amino-acid chain; its full sequence is Exodeoxyribonuclease 7 small subunit (83 aa).

The protein belongs to the XseB family. As to quaternary structure, heterooligomer composed of large and small subunits.

Its subcellular location is the cytoplasm. The enzyme catalyses Exonucleolytic cleavage in either 5'- to 3'- or 3'- to 5'-direction to yield nucleoside 5'-phosphates.. In terms of biological role, bidirectionally degrades single-stranded DNA into large acid-insoluble oligonucleotides, which are then degraded further into small acid-soluble oligonucleotides. This is Exodeoxyribonuclease 7 small subunit from Bradyrhizobium sp. (strain BTAi1 / ATCC BAA-1182).